A 579-amino-acid polypeptide reads, in one-letter code: MSGTLMRMAGPTVVAEGLSGASLNEVVRVGEERLLGEIIRIEGDRATIQVYEETAGLALGEPVEASGEPLAVELGPGLLGSVFDGVQRPLSELAAREGDFLGRGASLPALDRARAWEFEPAVAPGDRVEGGARLGVARAPGAPDHLVVVPPGVTGRVSEVRGGARRVDEPAVLLDGGATLALLERWPVRRPRPARRRLPPDVPFLTGQRVLDCFFPVSAGGTAVVPGGFGTGKTVLEQSLAKWAAADVVVYVGCGERGNEMSEVLDEFPRLEDPRTGGPLLARTVMIVNTSNMPVAAREASIYTGCAIAEYFRDMGRSVALMIDSTSRWAEALREISARLEEMPGEEGYPTYLASRLARFYERAGRVETLGGAEGAVTMVGAVSPPGGDLSEPVTQCSLRATGALWALSADLAHRRHYPAVDWSVSFTLEGDRLAGWFEREAGDGFGALRDEARKLLQRERELAEVAELVGTESLQDAERLVLESARLLREGFLRQSALDPADATCPPAKAFEMLRLFLEWHRRAGAAVGAGVPLRSILDTGLGARLLRLAQLPAAEVPGAAAALRADLSEALARLEAE.

ATP is bound at residue 227-234 (GGFGTGKT).

The protein belongs to the ATPase alpha/beta chains family.

It catalyses the reaction ATP + H2O + 4 H(+)(in) = ADP + phosphate + 5 H(+)(out). Produces ATP from ADP in the presence of a proton gradient across the membrane. The V-type alpha chain is a catalytic subunit. This Anaeromyxobacter sp. (strain K) protein is V-type ATP synthase alpha chain.